We begin with the raw amino-acid sequence, 240 residues long: Ribosomal RNA large subunit methyltransferase E (240 aa).

Over residues 1–20 (MSKAGGNKGGSRTGGRGGAG) the composition is skewed to gly residues. Residues 1–33 (MSKAGGNKGGSRTGGRGGAGSSNLHVRVKKKAG) form a disordered region. Residues glycine 92, tryptophan 94, aspartate 115, aspartate 131, and aspartate 155 each coordinate S-adenosyl-L-methionine. Lysine 195 (proton acceptor) is an active-site residue.

It belongs to the class I-like SAM-binding methyltransferase superfamily. RNA methyltransferase RlmE family.

It localises to the cytoplasm. It catalyses the reaction uridine(2552) in 23S rRNA + S-adenosyl-L-methionine = 2'-O-methyluridine(2552) in 23S rRNA + S-adenosyl-L-homocysteine + H(+). Specifically methylates the uridine in position 2552 of 23S rRNA at the 2'-O position of the ribose in the fully assembled 50S ribosomal subunit. This chain is Ribosomal RNA large subunit methyltransferase E, found in Brucella abortus (strain S19).